A 256-amino-acid polypeptide reads, in one-letter code: UstYa family oxidase phomYc (256 aa).

A helical transmembrane segment spans residues 38–58 (LVLVLQFVLIISLLASLHILG). 2 N-linked (GlcNAc...) asparagine glycosylation sites follow: asparagine 64 and asparagine 132. The HXXHC 1 motif lies at 158–162 (HQLHC). Asparagine 179 carries an N-linked (GlcNAc...) asparagine glycan. An HXXHC 2 motif is present at residues 193–197 (HIDHC).

It belongs to the ustYa family.

It is found in the membrane. The protein operates within mycotoxin biosynthesis. UstYa family oxidase; part of the gene cluster that mediates the biosynthesis of the phomopsins, a group of hexapeptide mycotoxins which infects lupins and causes lupinosis disease in livestock. Within the pathway, phomYc catalyzes the desaturation of the Ile moiety into 2,3-dehydroisoleucine (dIle). The pathway starts with the processing of the precursor phomA by several endopeptidases including kexin proteases as well as the cluster-specific S41 family peptidase phomP1 and the oligopeptidase phomG to produce 10 identical copies of the hexapeptide Tyr-Val-Ile-Pro-Ile-Asp. After being excised from the precursor peptide, the core peptides are cyclized and modified post-translationally by enzymes encoded within the gene cluster. The timing and order of proteolysis of the phomA precursor and PTMs are still unknown. Two tyrosinase-like enzymes, phomQ1 and phomQ2, catalyze the chlorination and hydroxylation of Tyr, respectively. PhomYb, is proposed to be involved in the construction of the macrocyclic structure. The other 4 ustYa family proteins may be involved in PTMs that generate the unique structure of phomopsin A. PhomYa is required for the hydroxylation of C-beta of Tyr. PhomYc, phomYd, and phomYe are responsible for the biosynthesis of 2,3-dehydroisoleucine (dIle), 2,3-dehydroaspartic acid (dAsp), and 3,4-dehydroproline (dPro), respectively. While dIle formation by phomYc is indispensable for the installation of dAsp by phomYd, the order of the other PTMs have not been elucidated yet. Most of the biosynthetic enzymes likely have broad substrate specificity, and thus, there might be a metabolic grid from a precursor to phomopsin A. The enzyme(s) responsible for the biosynthesis of 3,4-dehydrovaline (dVal) have also not been identified yet. Finally, phomM acts as an S-adenosylmethionine-dependent alpha-N-methyltransferase that catalyzes two successive N-methylation reactions, converting N-desmethyl-phomopsin A to phomopsin A and phomopsin A further to an N,N-dimethylated congener called phomopsin E. This Diaporthe leptostromiformis (Lupinosis disease fungus) protein is UstYa family oxidase phomYc.